Here is a 386-residue protein sequence, read N- to C-terminus: 4-hydroxy-3-methylbut-2-en-1-yl diphosphate synthase (flavodoxin) (386 aa).

The [4Fe-4S] cluster site is built by cysteine 281, cysteine 284, cysteine 316, and glutamate 323.

It belongs to the IspG family. [4Fe-4S] cluster is required as a cofactor.

The enzyme catalyses (2E)-4-hydroxy-3-methylbut-2-enyl diphosphate + oxidized [flavodoxin] + H2O + 2 H(+) = 2-C-methyl-D-erythritol 2,4-cyclic diphosphate + reduced [flavodoxin]. The protein operates within isoprenoid biosynthesis; isopentenyl diphosphate biosynthesis via DXP pathway; isopentenyl diphosphate from 1-deoxy-D-xylulose 5-phosphate: step 5/6. In terms of biological role, converts 2C-methyl-D-erythritol 2,4-cyclodiphosphate (ME-2,4cPP) into 1-hydroxy-2-methyl-2-(E)-butenyl 4-diphosphate. The sequence is that of 4-hydroxy-3-methylbut-2-en-1-yl diphosphate synthase (flavodoxin) from Corynebacterium jeikeium (strain K411).